A 153-amino-acid chain; its full sequence is Interleukin-17A (153 aa).

Positions methionine 1–alanine 23 are cleaved as a signal peptide. Asparagine 53 is a glycosylation site (N-linked (GlcNAc...) asparagine). 2 disulfides stabilise this stretch: cysteine 92–cysteine 142 and cysteine 97–cysteine 144.

Belongs to the IL-17 family. Homodimer. Forms complexes with IL17RA and IL17RC receptors with 2:1 binding stoichiometry: two receptor chains for one interleukin molecule. IL17A homodimer preferentially drives the formation of IL17RA-IL17RC heterodimeric receptor complex. IL17A homodimer adopts an asymmetrical ternary structure with one IL17RA molecule, allowing for high affinity interactions of one IL17A monomer with one IL17RA molecule (via D1 and D2 domains), while disfavoring binding of a second IL17RA molecule on the other IL17A monomer. Heterodimer with IL17F. IL17A-IL17F forms complexes with IL17RA-IL17RC, but with lower affinity when compared to IL17A homodimer. IL17RA and IL17RC chains cannot distinguish between IL17A and IL17F molecules, potentially enabling the formation of topologically distinct complexes. Highly expressed in adult heart, skin, and intestinal tissues, such as jejunum and ileum.

Its subcellular location is the secreted. Its function is as follows. Effector cytokine of innate and adaptive immune system involved in antimicrobial host defense and maintenance of tissue integrity. Signals via IL17RA-IL17RC heterodimeric receptor complex, triggering homotypic interaction of IL17RA and IL17RC chains with TRAF3IP2 adapter. This leads to downstream TRAF6-mediated activation of NF-kappa-B and MAPkinase pathways ultimately resulting in transcriptional activation of cytokines, chemokines, antimicrobial peptides and matrix metalloproteinases, with potential strong immune inflammation. Plays an important role in connecting T cell-mediated adaptive immunity and acute inflammatory response to destroy extracellular bacteria and fungi. As a signature effector cytokine of T-helper 17 cells (Th17), primarily induces neutrophil activation and recruitment at infection and inflammatory sites. In airway epithelium, mediates neutrophil chemotaxis via induction of CXCL1 and CXCL5 chemokines. In secondary lymphoid organs, contributes to germinal center formation by regulating the chemotactic response of B cells to CXCL12 and CXCL13, enhancing retention of B cells within the germinal centers, B cell somatic hypermutation rate and selection toward plasma cells. Effector cytokine of a subset of gamma-delta T cells that functions as part of an inflammatory circuit downstream IL1B, TLR2 and IL23A-IL12B to promote neutrophil recruitment for efficient bacterial clearance. Effector cytokine of innate immune cells including invariant natural killer cell (iNKT) and group 3 innate lymphoid cells that mediate initial neutrophilic inflammation. Involved in the maintenance of the integrity of epithelial barriers during homeostasis and pathogen infection. Upon acute injury, has a direct role in epithelial barrier formation by regulating OCLN localization and tight junction biogenesis. As part of the mucosal immune response induced by commensal bacteria, enhances host's ability to resist pathogenic bacterial and fungal infections by promoting neutrophil recruitment and antimicrobial peptides release. In synergy with IL17F, mediates the production of antimicrobial beta-defensins DEFB1, DEFB103A, and DEFB104A by mucosal epithelial cells, limiting the entry of microbes through the epithelial barriers. Involved in antiviral host defense through various mechanisms. Enhances immunity against West Nile virus by promoting T cell cytotoxicity. May play a beneficial role in influenza A virus (H5N1) infection by enhancing B cell recruitment and immune response in the lung. Contributes to influenza A virus (H1N1) clearance by driving the differentiation of B-1a B cells, providing for production of virus-specific IgM antibodies at first line of host defense. The chain is Interleukin-17A (IL17A) from Sus scrofa (Pig).